Consider the following 649-residue polypeptide: Endoplasmic reticulum chaperone BiP (649 aa).

Residues 1 to 20 (MGLSTYVGTFLLCILTLSHC) form the signal peptide. ATP is bound by residues 36–39 (GTTY), Lys-96, 226–228 (GGT), 292–299 (EKAKRTLS), and 363–366 (GSTR). Residues 125-279 (KPYMKVQVGS…KKKEGKDITK (155 aa)) are nucleotide-binding (NBD). A substrate-binding (SBD) region spans residues 399–499 (VQAGVISGVE…PRGLPQIEVT (101 aa)). The Prevents secretion from ER signature appears at 646-649 (KEEL).

Belongs to the heat shock protein 70 family.

Its subcellular location is the endoplasmic reticulum lumen. The catalysed reaction is ATP + H2O = ADP + phosphate + H(+). With respect to regulation, the chaperone activity is regulated by ATP-induced allosteric coupling of the nucleotide-binding (NBD) and substrate-binding (SBD) domains. In the ADP-bound and nucleotide-free (apo) states, the two domains have little interaction. In contrast, in the ATP-bound state the two domains are tightly coupled, which results in drastically accelerated kinetics in both binding and release of polypeptide substrates. J domain-containing co-chaperones stimulate the ATPase activity and are required for efficient substrate recognition. Functionally, endoplasmic reticulum chaperone that plays a key role in protein folding and quality control in the endoplasmic reticulum lumen. Involved in the correct folding of proteins and degradation of misfolded proteins. Acts as a key repressor of the unfolded protein response (UPR). The sequence is that of Endoplasmic reticulum chaperone BiP from Echinococcus multilocularis (Fox tapeworm).